A 325-amino-acid chain; its full sequence is Glutarate 2-hydroxylase (325 aa).

Fe cation contacts are provided by His160, Asp162, and His292.

Belongs to the glutarate hydroxylase family. In terms of assembly, homotetramer. Requires Fe(2+) as cofactor.

The enzyme catalyses glutarate + 2-oxoglutarate + O2 = (S)-2-hydroxyglutarate + succinate + CO2. It functions in the pathway amino-acid degradation. Its function is as follows. Acts as an alpha-ketoglutarate-dependent dioxygenase catalyzing hydroxylation of glutarate (GA) to L-2-hydroxyglutarate (L2HG). Functions in a L-lysine degradation pathway that proceeds via cadaverine, glutarate and L-2-hydroxyglutarate. The protein is Glutarate 2-hydroxylase of Salmonella newport (strain SL254).